The following is a 217-amino-acid chain: Ribonuclease HII (217 aa).

An RNase H type-2 domain is found at 26–215 (EIVCGVDEAG…VREALDLMAG (190 aa)). A divalent metal cation contacts are provided by aspartate 32, glutamate 33, and aspartate 124.

The protein belongs to the RNase HII family. Mn(2+) is required as a cofactor. The cofactor is Mg(2+).

Its subcellular location is the cytoplasm. It catalyses the reaction Endonucleolytic cleavage to 5'-phosphomonoester.. Functionally, endonuclease that specifically degrades the RNA of RNA-DNA hybrids. This is Ribonuclease HII from Burkholderia ambifaria (strain ATCC BAA-244 / DSM 16087 / CCUG 44356 / LMG 19182 / AMMD) (Burkholderia cepacia (strain AMMD)).